A 578-amino-acid polypeptide reads, in one-letter code: Phenylalanine--tRNA ligase beta subunit (578 aa).

In terms of domain architecture, B5 spans 292–370 (FDTDEKSVSH…RAYGFDNLEP (79 aa)). Mg(2+)-binding residues include Asp348, Asp354, Asp357, and Asp358.

Belongs to the phenylalanyl-tRNA synthetase beta subunit family. Type 2 subfamily. Tetramer of two alpha and two beta subunits. Mg(2+) is required as a cofactor.

The protein localises to the cytoplasm. It carries out the reaction tRNA(Phe) + L-phenylalanine + ATP = L-phenylalanyl-tRNA(Phe) + AMP + diphosphate + H(+). This Halorubrum lacusprofundi (strain ATCC 49239 / DSM 5036 / JCM 8891 / ACAM 34) protein is Phenylalanine--tRNA ligase beta subunit.